Consider the following 392-residue polypeptide: Putative glutamate--cysteine ligase 2 (392 aa).

A disordered region spans residues 347-367; the sequence is AARKHGAAPEPGTRTRGDDGV.

The protein belongs to the glutamate--cysteine ligase type 2 family. YbdK subfamily.

It carries out the reaction L-cysteine + L-glutamate + ATP = gamma-L-glutamyl-L-cysteine + ADP + phosphate + H(+). In terms of biological role, ATP-dependent carboxylate-amine ligase which exhibits weak glutamate--cysteine ligase activity. This is Putative glutamate--cysteine ligase 2 from Corynebacterium jeikeium (strain K411).